We begin with the raw amino-acid sequence, 496 residues long: Cytochrome c-552 (496 aa).

The signal sequence occupies residues 1 to 23 (MKKYKFLFAISIIAIGLMTVLLA). Histidine 100 serves as a coordination point for heme c. The heme site is built by cysteine 128, cysteine 131, and lysine 132. Cysteine 166, cysteine 169, histidine 170, cysteine 210, cysteine 213, and histidine 214 together coordinate heme c. Ca(2+) is bound by residues glutamate 216, tyrosine 217, lysine 269, and glutamine 271. Tyrosine 217 contacts substrate. Histidine 272 is a binding site for substrate. Positions 283, 290, 293, 294, 308, 321, 324, 325, and 400 each coordinate heme c.

This sequence belongs to the cytochrome c-552 family. It depends on Ca(2+) as a cofactor. Heme c serves as cofactor.

The protein localises to the periplasm. The catalysed reaction is 6 Fe(III)-[cytochrome c] + NH4(+) + 2 H2O = 6 Fe(II)-[cytochrome c] + nitrite + 8 H(+). It participates in nitrogen metabolism; nitrate reduction (assimilation). Functionally, catalyzes the reduction of nitrite to ammonia, consuming six electrons in the process. This is Cytochrome c-552 from Aliarcobacter butzleri (strain RM4018) (Arcobacter butzleri).